Reading from the N-terminus, the 473-residue chain is 3-isopropylmalate dehydratase large subunit (473 aa).

[4Fe-4S] cluster is bound by residues Cys-354, Cys-414, and Cys-417.

It belongs to the aconitase/IPM isomerase family. LeuC type 1 subfamily. In terms of assembly, heterodimer of LeuC and LeuD. It depends on [4Fe-4S] cluster as a cofactor.

The catalysed reaction is (2R,3S)-3-isopropylmalate = (2S)-2-isopropylmalate. The protein operates within amino-acid biosynthesis; L-leucine biosynthesis; L-leucine from 3-methyl-2-oxobutanoate: step 2/4. Its function is as follows. Catalyzes the isomerization between 2-isopropylmalate and 3-isopropylmalate, via the formation of 2-isopropylmaleate. In Mycobacterium tuberculosis (strain CDC 1551 / Oshkosh), this protein is 3-isopropylmalate dehydratase large subunit.